A 189-amino-acid polypeptide reads, in one-letter code: Glucose-6-phosphate isomerase (189 aa).

Positions 88, 90, 97, and 136 each coordinate Fe cation.

It belongs to the archaeal-type GPI family. Homodimer.

It is found in the cytoplasm. It catalyses the reaction alpha-D-glucose 6-phosphate = beta-D-fructose 6-phosphate. It participates in carbohydrate degradation; glycolysis; D-glyceraldehyde 3-phosphate and glycerone phosphate from D-glucose: step 2/4. This is Glucose-6-phosphate isomerase from Thermococcus onnurineus (strain NA1).